The chain runs to 630 residues: MASSKFEEVRDKVKEFPTQSGVYLMKNTADKIIYIGKAKNLRNRVRSYFNDSKDHSPKTRLLVSNICEVEYILTKTEVEAFLLEASLIKKHRPKYNIRLRDDKAYPYIRFSWGDQAPRLYLARKVKKDGSLYFGPYTSGLAVHGTIKFLNRTFKIRDCTDAVFKSRTRPCMTYQIGRCTAPCVKYITMEDYRNEVEGAKLFLKGQNKKVIKSMTEKMMGAADEEKFEVAARLRDSIEAIKAILQKQAVINDTSEKDQDALGYYGDERGCLIETVHIRAGRVIGTRPHYLPHFDPNDAVEDPREWLVDFLNQYYEDNFIPDEVLLPLDIGNDLTKLMEEVLKERSGSKTTVRFATDERGRNLVDMAHENAKSHFLKYVSKSEEKLRGLEEIKERFNLPERPRRIECYDISTFQGAETVASQVVFEDGVPAKEHYRRYKIKTVQGINDFASMYEVLSRRFKHTEYDDPQLIVIDGGKGQLSQAMKILEEIGRKDIPVVGLAKARTESDFQKQEVESTEERFFLPGRSNPVIFKHNAEALYILSGIRDEAHRFAITYHRKLREGTSLESELDYVVGLGEKRKKVLLTQFNSIDEIKMADPEEIAKLKGFNRVLAERILLQLNESEEEETEVEE.

A GIY-YIG domain is found at 18-97 (TQSGVYLMKN…IKKHRPKYNI (80 aa)). The region spanning 207-242 (KKVIKSMTEKMMGAADEEKFEVAARLRDSIEAIKAI) is the UVR domain.

This sequence belongs to the UvrC family. Interacts with UvrB in an incision complex.

The protein localises to the cytoplasm. The UvrABC repair system catalyzes the recognition and processing of DNA lesions. UvrC both incises the 5' and 3' sides of the lesion. The N-terminal half is responsible for the 3' incision and the C-terminal half is responsible for the 5' incision. The polypeptide is UvrABC system protein C (Bdellovibrio bacteriovorus (strain ATCC 15356 / DSM 50701 / NCIMB 9529 / HD100)).